Here is a 349-residue protein sequence, read N- to C-terminus: uncharacterized protein (349 aa).

The 110-residue stretch at 51-160 (NIIKENKNNL…QDESYISIFQ (110 aa)) folds into the THUMP domain.

This is an uncharacterized protein from Methanocaldococcus jannaschii (strain ATCC 43067 / DSM 2661 / JAL-1 / JCM 10045 / NBRC 100440) (Methanococcus jannaschii).